We begin with the raw amino-acid sequence, 393 residues long: Formate-dependent phosphoribosylglycinamide formyltransferase (393 aa).

Residues 22–23 (EL) and E82 each bind N(1)-(5-phospho-beta-D-ribosyl)glycinamide. Residues R114, K155, 160–165 (SSGKGQ), 195–198 (EGFI), and E203 each bind ATP. The ATP-grasp domain occupies 119-308 (RLAAEELDLP…QFALHARAIL (190 aa)). Residues E267 and E279 each coordinate Mg(2+). N(1)-(5-phospho-beta-D-ribosyl)glycinamide contacts are provided by residues D286, K356, and 363-364 (RR).

This sequence belongs to the PurK/PurT family. In terms of assembly, homodimer.

The catalysed reaction is N(1)-(5-phospho-beta-D-ribosyl)glycinamide + formate + ATP = N(2)-formyl-N(1)-(5-phospho-beta-D-ribosyl)glycinamide + ADP + phosphate + H(+). The protein operates within purine metabolism; IMP biosynthesis via de novo pathway; N(2)-formyl-N(1)-(5-phospho-D-ribosyl)glycinamide from N(1)-(5-phospho-D-ribosyl)glycinamide (formate route): step 1/1. Functionally, involved in the de novo purine biosynthesis. Catalyzes the transfer of formate to 5-phospho-ribosyl-glycinamide (GAR), producing 5-phospho-ribosyl-N-formylglycinamide (FGAR). Formate is provided by PurU via hydrolysis of 10-formyl-tetrahydrofolate. The sequence is that of Formate-dependent phosphoribosylglycinamide formyltransferase from Pseudomonas putida (strain GB-1).